Consider the following 211-residue polypeptide: uncharacterized protein (211 aa).

The stretch at 105 to 143 (IEENEFDKVRKSSDKLINEIEKTKSSLREDVKTALSEVR) forms a coiled coil. Residues 191–211 (QWFTGFVGVVSSVVLIILFYF) traverse the membrane as a helical segment.

It belongs to the CCDC90 family.

It localises to the mitochondrion. The protein localises to the membrane. This is an uncharacterized protein from Schizosaccharomyces pombe (strain 972 / ATCC 24843) (Fission yeast).